A 142-amino-acid chain; its full sequence is Nucleoside diphosphate kinase (142 aa).

Positions 11, 59, 87, 93, 104, and 114 each coordinate ATP. His117 (pros-phosphohistidine intermediate) is an active-site residue.

Belongs to the NDK family. Homotetramer. It depends on Mg(2+) as a cofactor.

Its subcellular location is the cytoplasm. It catalyses the reaction a 2'-deoxyribonucleoside 5'-diphosphate + ATP = a 2'-deoxyribonucleoside 5'-triphosphate + ADP. It carries out the reaction a ribonucleoside 5'-diphosphate + ATP = a ribonucleoside 5'-triphosphate + ADP. Major role in the synthesis of nucleoside triphosphates other than ATP. The ATP gamma phosphate is transferred to the NDP beta phosphate via a ping-pong mechanism, using a phosphorylated active-site intermediate. The polypeptide is Nucleoside diphosphate kinase (Pectobacterium atrosepticum (strain SCRI 1043 / ATCC BAA-672) (Erwinia carotovora subsp. atroseptica)).